We begin with the raw amino-acid sequence, 610 residues long: ATP-dependent zinc metalloprotease FtsH (610 aa).

Over 1–3 (MAK) the chain is Cytoplasmic. Residues 4–24 (NLMLWLVIAVVLMSIFQNFSA) form a helical membrane-spanning segment. The Extracellular portion of the chain corresponds to 25–97 (NNINNRKIDY…IIGAAPEEQS (73 aa)). The chain crosses the membrane as a helical span at residues 98–118 (FFTAIFISWFPMLLLIGVWVF). Over 119 to 610 (FMRQMQVGGG…SNICTDDDNN (492 aa)) the chain is Cytoplasmic. 192-199 (GPPGTGKT) lines the ATP pocket. Residue His-414 participates in Zn(2+) binding. Glu-415 is a catalytic residue. The Zn(2+) site is built by His-418 and Asp-492.

It in the central section; belongs to the AAA ATPase family. This sequence in the C-terminal section; belongs to the peptidase M41 family. Homohexamer. Zn(2+) serves as cofactor.

Its subcellular location is the cell membrane. Functionally, acts as a processive, ATP-dependent zinc metallopeptidase for both cytoplasmic and membrane proteins. Plays a role in the quality control of integral membrane proteins. This is ATP-dependent zinc metalloprotease FtsH from Buchnera aphidicola subsp. Baizongia pistaciae (strain Bp).